Here is a 148-residue protein sequence, read N- to C-terminus: F-box protein At3g55900 (148 aa).

The region spanning C9–L59 is the F-box domain.

In Arabidopsis thaliana (Mouse-ear cress), this protein is F-box protein At3g55900.